Here is a 79-residue protein sequence, read N- to C-terminus: Moronecidin (79 aa).

An N-terminal signal peptide occupies residues 1-22 (MKCATLFLVLSMVVLMAEPGDA). At Gly-44 the chain carries Glycine amide. Positions 45-79 (GKAEQDQQDQQYQQEQQEQQAQQYQRFNRERAAFD) are disordered. Residues 47–79 (AEQDQQDQQYQQEQQEQQAQQYQRFNRERAAFD) constitute a propeptide that is removed on maturation. Positions 52–69 (QDQQYQQEQQEQQAQQYQ) are enriched in low complexity.

Expressed in mast cells in gill, skin and gut, and in lining blood vessels in the viscera. Also in intestine, spleen, anterior kidney, and blood cells.

Its subcellular location is the secreted. Functionally, antimicrobial peptide with broad-spectrum activity against Gram-positive and Gram-negative bacteria as well as against a variety of fungi. Rapidly inactivates channel catfish herpesvirus (ED(50)=4 uM) and frog virus 3 (ED(50)=13 uM) over a wide temperature range. Seems to disrupt the membranes by adopting an alpha helical conformation and forming toroidal pores. Has hemolytic activity. The chain is Moronecidin from Morone saxatilis (Striped bass).